The primary structure comprises 146 residues: Probable trivalent organoarsenical cleaving enzyme (146 aa).

The VOC domain maps to 2–118; sequence KYVHVGVNVV…DGNEWEFFYT (117 aa). 2 residues coordinate Fe(2+): His5 and His62. Residues Cys95 and Cys96 each contribute to the roxarsone (III) site. Glu114 lines the Fe(2+) pocket.

The protein to M.tuberculosis Rv2641. It depends on Fe(2+) as a cofactor.

It catalyses the reaction methylarsonous acid + AH2 + O2 = arsenite + methanol + A + H(+). It carries out the reaction roxarsone (III) + AH2 + O2 = 4-hydroxy-3-nitrocyclohexa-2,5-dien-1-one + arsenite + A + H(+). The catalysed reaction is nitarsone (III) + AH2 + O2 = 4-nitrocyclohexa-2,5-dien-1-one + arsenite + A + H(+). The enzyme catalyses 4-aminophenylarsonous acid + AH2 + O2 = 4-aminocyclohexa-2,5-dien-1-one + arsenite + A. Its function is as follows. Nonheme iron-dependent dioxygenase that can break carbon-arsenic bonds, playing a role in the detoxification of environmental organoarsenical compounds. Catalyzes the oxygen-dependent demethylation of highly toxic methylarsonous acid (MAs(III)) to arsenite, which can then be exported out of the cell. Can also cleave the C-As bond in several trivalent aromatic arsenicals, including roxarsone (III), nitarsone (III) and (4-aminophenyl)arsonous acid. Organoarsenical degradation by this enzyme is proposed to have a significant impact on the arsenic biogeocycle that maintains a balance between organic and inorganic species. The sequence is that of Probable trivalent organoarsenical cleaving enzyme (yqcK) from Bacillus subtilis (strain 168).